The primary structure comprises 306 residues: Ornithine carbamoyltransferase (306 aa).

Residues 46 to 49, Gln-73, Arg-97, and 124 to 127 each bind carbamoyl phosphate; these read STRT and HPTQ. Residues Asn-156, Asp-220, and 224–225 each bind L-ornithine; that span reads SM. Residues 260–261 and Arg-288 contribute to the carbamoyl phosphate site; that span reads CL.

Belongs to the aspartate/ornithine carbamoyltransferase superfamily. OTCase family.

The protein localises to the cytoplasm. The enzyme catalyses carbamoyl phosphate + L-ornithine = L-citrulline + phosphate + H(+). It participates in amino-acid biosynthesis; L-arginine biosynthesis; L-arginine from L-ornithine and carbamoyl phosphate: step 1/3. Its function is as follows. Reversibly catalyzes the transfer of the carbamoyl group from carbamoyl phosphate (CP) to the N(epsilon) atom of ornithine (ORN) to produce L-citrulline. The protein is Ornithine carbamoyltransferase of Campylobacter jejuni (strain RM1221).